The following is a 245-amino-acid chain: Adenosylcobinamide-GDP ribazoletransferase (245 aa).

5 helical membrane passes run Phe31–Ala51, Pro61–Leu81, Val113–Leu133, Ala138–Thr158, and Leu192–Leu212.

Belongs to the CobS family. It depends on Mg(2+) as a cofactor.

The protein localises to the cell inner membrane. It catalyses the reaction alpha-ribazole + adenosylcob(III)inamide-GDP = adenosylcob(III)alamin + GMP + H(+). The catalysed reaction is alpha-ribazole 5'-phosphate + adenosylcob(III)inamide-GDP = adenosylcob(III)alamin 5'-phosphate + GMP + H(+). It participates in cofactor biosynthesis; adenosylcobalamin biosynthesis; adenosylcobalamin from cob(II)yrinate a,c-diamide: step 7/7. In terms of biological role, joins adenosylcobinamide-GDP and alpha-ribazole to generate adenosylcobalamin (Ado-cobalamin). Also synthesizes adenosylcobalamin 5'-phosphate from adenosylcobinamide-GDP and alpha-ribazole 5'-phosphate. In Pseudomonas aeruginosa (strain UCBPP-PA14), this protein is Adenosylcobinamide-GDP ribazoletransferase.